The primary structure comprises 757 residues: uncharacterized protein (757 aa).

This is an uncharacterized protein from Dictyostelium discoideum (Social amoeba).